The chain runs to 103 residues: UPF0145 protein Rsph17025_2361 (103 aa).

Belongs to the UPF0145 family.

The sequence is that of UPF0145 protein Rsph17025_2361 from Cereibacter sphaeroides (strain ATCC 17025 / ATH 2.4.3) (Rhodobacter sphaeroides).